Here is a 248-residue protein sequence, read N- to C-terminus: Triosephosphate isomerase (248 aa).

Threonine 4 is modified (phosphothreonine). Positions 10 and 12 each coordinate substrate. Position 71 is a phosphoserine (serine 71). The active-site Electrophile is histidine 95. Catalysis depends on glutamate 165, which acts as the Proton acceptor. Serine 215 bears the Phosphoserine mark. A Glycyl lysine isopeptide (Lys-Gly) (interchain with G-Cter in ubiquitin) cross-link involves residue lysine 223.

This sequence belongs to the triosephosphate isomerase family. Homodimer.

It carries out the reaction D-glyceraldehyde 3-phosphate = dihydroxyacetone phosphate. Its pathway is carbohydrate biosynthesis; gluconeogenesis. The protein operates within carbohydrate degradation; glycolysis; D-glyceraldehyde 3-phosphate from glycerone phosphate: step 1/1. The sequence is that of Triosephosphate isomerase (TPI1) from Saccharomyces cerevisiae (strain ATCC 204508 / S288c) (Baker's yeast).